Consider the following 57-residue polypeptide: Large ribosomal subunit protein eL20 (57 aa).

This sequence belongs to the eukaryotic ribosomal protein eL20 family. As to quaternary structure, part of the 50S ribosomal subunit. Binds 23S rRNA.

The chain is Large ribosomal subunit protein eL20 from Halorhabdus utahensis (strain DSM 12940 / JCM 11049 / AX-2).